The following is a 120-amino-acid chain: uncharacterized protein (120 aa).

A helical transmembrane segment spans residues 47-63; sequence VSIVIGLCTVLISAGAG.

The protein localises to the membrane. This is an uncharacterized protein from Sinorhizobium fredii (strain NBRC 101917 / NGR234).